The chain runs to 337 residues: MLRQIGEFYHQGEKDDTSRVWMTCWHHGGRILASCGDDKAVRVWSLVGEPDSKMRLECRTTLDDSHTRAVRSVAFSNDGKCLVSASFDASVVVYQQEDGEFAEVNKLEGHESEVKCAVFSKSDEFLATCSRDKSVWFWQQDEDEDFSVSSILQPHTQDVKQVAWHPTEDLLVSCSYDSSIRFYRFDGEDWVTQQKIDGCHVGTVWSIAFDTEGHRLVTVGEDHCIQLFVRENIGSKSADQDTWKSVARYDVENTRWPLYSVAWNSTNDVIATGGGDCKIRLFKISSTPESPVIEHLGVVGRHELDVNHVAWNPNPKFSNLLTSASDDGTIRLWELEI.

WD repeat units follow at residues 15–54 (DDTS…DSKM), 65–104 (SHTR…FAEV), 109–148 (GHES…DFSV), 154–193 (PHTQ…WVTQ), 199–238 (CHVG…SKSA), 253–292 (NTRW…ESPV), and 301–337 (RHEL…ELEI).

The protein belongs to the WD repeat CIA1 family.

Essential component of the cytosolic iron-sulfur (Fe/S) protein assembly machinery. Required for the maturation of extramitochondrial Fe/S proteins. This Caenorhabditis elegans protein is Probable cytosolic iron-sulfur protein assembly protein CIAO1 homolog.